A 181-amino-acid polypeptide reads, in one-letter code: PLAT domain-containing protein 1 (181 aa).

An N-terminal signal peptide occupies residues 1-14 (MARRDVLLPFLLLL). A15 bears the N-acetylalanine mark. Residues 29-156 (CVYTFYLRTG…SPYELTAVRN (128 aa)) enclose the PLAT domain.

In terms of tissue distribution, expressed in root tips, pericycle cells, lateral root primordia, stomata, leaf vasculature, hydathodes and floral organs.

It is found in the endoplasmic reticulum. The protein localises to the plastid. The protein resides in the chloroplast. Its subcellular location is the plastoglobule. Functionally, positive regulator of abiotic stress tolerance involved in the regulation of plant growth. May be a downstream target of the abscisic acid (ABA) signaling pathway. The sequence is that of PLAT domain-containing protein 1 from Arabidopsis thaliana (Mouse-ear cress).